Reading from the N-terminus, the 400-residue chain is Dual specificity mitogen-activated protein kinase kinase 2 (400 aa).

M1 bears the N-acetylmethionine mark. Phosphoserine is present on S23. The Protein kinase domain maps to 72 to 369 (FERISELGAG…LKLLTNHAFI (298 aa)). Residues 78 to 86 (LGAGNGGVV) and K101 contribute to the ATP site. D194 acts as the Proton acceptor in catalysis. 2 positions are modified to phosphoserine; by RAF: S222 and S226. A disordered region spans residues 282–310 (PVVDGADGEPHSVSPRPRPPGRPISGHGM). Phosphoserine is present on residues S293, S295, and S306. T394 and T396 each carry phosphothreonine.

Belongs to the protein kinase superfamily. STE Ser/Thr protein kinase family. MAP kinase kinase subfamily. In terms of assembly, interacts with MORG1. Interacts with SGK1. Interacts with KSR1. Interacts with KSR1 and BRAF; the interaction with KSR1 mediates KSR1-BRAF dimerization. Interacts with GLS. It depends on Mg(2+) as a cofactor. In terms of processing, MAPKK is itself dependent on Ser/Thr phosphorylation for activity catalyzed by MAP kinase kinase kinases (RAF or MEKK1). Phosphorylated by MAP2K1/MEK1. Expressed abundantly in the adult brain and muscle.

It localises to the cytoplasm. Its subcellular location is the membrane. It carries out the reaction L-seryl-[protein] + ATP = O-phospho-L-seryl-[protein] + ADP + H(+). The catalysed reaction is L-threonyl-[protein] + ATP = O-phospho-L-threonyl-[protein] + ADP + H(+). The enzyme catalyses L-tyrosyl-[protein] + ATP = O-phospho-L-tyrosyl-[protein] + ADP + H(+). Catalyzes the concomitant phosphorylation of a threonine and a tyrosine residue in a Thr-Glu-Tyr sequence located in MAP kinases. Activates the ERK1 and ERK2 MAP kinases. Activates BRAF in a KSR1 or KSR2-dependent manner; by binding to KSR1 or KSR2 releases the inhibitory intramolecular interaction between KSR1 or KSR2 protein kinase and N-terminal domains which promotes KSR1 or KSR2-BRAF dimerization and BRAF activation. In Rattus norvegicus (Rat), this protein is Dual specificity mitogen-activated protein kinase kinase 2 (Map2k2).